The primary structure comprises 501 residues: NADH-quinone oxidoreductase subunit N (501 aa).

14 helical membrane passes run 4 to 24 (HLPI…RLLV), 34 to 54 (FVLA…AETL), 80 to 100 (LAGG…VYAG), 112 to 132 (GSFY…CATG), 134 to 154 (LFNL…LIAF), 167 to 187 (LIIG…LYAM), 207 to 227 (PVVI…MALF), 241 to 261 (PAPV…YALY), 278 to 298 (LQVL…MAIA), 314 to 334 (VGYI…GALL), 335 to 355 (HVLS…GVSW), 376 to 396 (MGAF…LGFF), 409 to 429 (GAWV…VYFF), and 463 to 483 (PASM…LGLF).

Belongs to the complex I subunit 2 family. As to quaternary structure, NDH-1 is composed of 14 different subunits. Subunits NuoA, H, J, K, L, M, N constitute the membrane sector of the complex.

It is found in the cell membrane. The enzyme catalyses a quinone + NADH + 5 H(+)(in) = a quinol + NAD(+) + 4 H(+)(out). NDH-1 shuttles electrons from NADH, via FMN and iron-sulfur (Fe-S) centers, to quinones in the respiratory chain. The immediate electron acceptor for the enzyme in this species is believed to be a menaquinone. Couples the redox reaction to proton translocation (for every two electrons transferred, four hydrogen ions are translocated across the cytoplasmic membrane), and thus conserves the redox energy in a proton gradient. In Desulforudis audaxviator (strain MP104C), this protein is NADH-quinone oxidoreductase subunit N.